The following is a 354-amino-acid chain: Mitogen-activated protein kinase kinase 1 (354 aa).

The region spanning 68–328 is the Protein kinase domain; it reads LEVIKVIGKG…AKELLEHKFV (261 aa). ATP is bound by residues 74 to 82 and lysine 97; that span reads IGKGSSGNV. Aspartate 190 (proton acceptor) is an active-site residue. Threonine 218 is subject to Phosphothreonine. The residue at position 224 (serine 224) is a Phosphoserine. Position 228 is a phosphothreonine (threonine 228).

This sequence belongs to the protein kinase superfamily. STE Ser/Thr protein kinase family. MAP kinase kinase subfamily. Interacts with MEKK1 and MPK4. May form a ternary complex composed of MEKK1 and MKK1/MKK2 and MPK4. Interacts with P.syringae type III effector HopF2. Interacts with MPK11. In terms of processing, phosphorylation at Thr-218 and Ser-224 by MAP kinase kinase kinases positively regulates kinase activity. Expressed in roots, stem, flowers and siliques.

The catalysed reaction is L-seryl-[protein] + ATP = O-phospho-L-seryl-[protein] + ADP + H(+). It carries out the reaction L-threonyl-[protein] + ATP = O-phospho-L-threonyl-[protein] + ADP + H(+). The enzyme catalyses L-tyrosyl-[protein] + ATP = O-phospho-L-tyrosyl-[protein] + ADP + H(+). With respect to regulation, activated through serine and threonine phosphorylation in response to wounding, cold, drought, salt stresses, abscisic acid (ABA), hydrogen peroxide, bacterial flagellin and laminarin beta-glucan. MEKK1, MKK1/MKK2 and MPK4/MPK6 function in a signaling pathway that modulates the expression of genes responding to biotic and abiotic stresses and also plays an important role in pathogen defense by negatively regulating innate immunity. Activates by phosphorylation the downstream MPK4. Acts redundantly with MKK2. MKK1-MPK6 module mediates abscisic acid (ABA)-dependent CAT1 expression with H(2)O(2) production and response to drought and salt stress. MKK1-MPK6 module is also involved in sugar signaling during the process of seed germination. The chain is Mitogen-activated protein kinase kinase 1 (MKK1) from Arabidopsis thaliana (Mouse-ear cress).